Reading from the N-terminus, the 684-residue chain is MRSFWSFPSSCLTAVASSVPRPASRSQAARVLHNLPRALTAFPQPSRTTRAFSLTSRLFQHLRAASDEETMTVNTTDRLAALRSLMKERNVDIYVVPSEDSHASEYIAECDARRAFISGFTGSAGTAVVTLDKAALATDGRYFNQASKQLDENWHLLKTGLQDVPTWQEWTADESAGGKSVGIDPTLISPAVADKLDGDIKKHGGAGLKAINENLVDLVWGDSRPPRPSEPVFLLGAKYSGKGTAEKLTNLRKELEKKKAAAFVVSMLDEVAWLFNLRGNDITYNPVFFSYAIVTKDSATLYVDESKLNDEVKQYLAENGTGIKPYNDLFKDTEILANAAKSTSESDKPTKYLVSNKASWALKLALGGEKHVDEVRSPIGDAKAIKNETELEGMRRCHIRDGAALIKYFAWLEDQLINKKAKLDEVEAADQLEQFRSEQADFVGLSFDTISSTGPNGAIIHYKPERGACSVIDPDAIYLCDSGAQFCDGTTDVTRTLHFGQPTDAERKSYTLVLKGNIALDTAVFPKGTSGFALDALARQFLWKYGLDYRHGTGHGVGSFLNVHEGPIGIGTRKAYIDVPLAPGNVLSIEPGYYEDGNYGIRIENLAIVREVKTEHQFGDKPYLGFEHVTMVPYCRKLIDESLLTQEEKDWLNKSNEEIRKNMAGYFDGDQLTTEWLLRETSPF.

Mn(2+)-binding residues include D481, D492, E590, and E604.

This sequence belongs to the peptidase M24B family. Mn(2+) is required as a cofactor.

The catalysed reaction is Release of any N-terminal amino acid, including proline, that is linked to proline, even from a dipeptide or tripeptide.. Catalyzes the removal of a penultimate prolyl residue from the N-termini of peptides. This chain is Probable Xaa-Pro aminopeptidase P (ampp), found in Neurospora crassa (strain ATCC 24698 / 74-OR23-1A / CBS 708.71 / DSM 1257 / FGSC 987).